The primary structure comprises 76 residues: Small ribosomal subunit protein eS17 (76 aa).

Belongs to the eukaryotic ribosomal protein eS17 family.

This chain is Small ribosomal subunit protein eS17, found in Picrophilus torridus (strain ATCC 700027 / DSM 9790 / JCM 10055 / NBRC 100828 / KAW 2/3).